The primary structure comprises 143 residues: Large ribosomal subunit protein uL11 (143 aa).

This sequence belongs to the universal ribosomal protein uL11 family. In terms of assembly, part of the ribosomal stalk of the 50S ribosomal subunit. Interacts with L10 and the large rRNA to form the base of the stalk. L10 forms an elongated spine to which L12 dimers bind in a sequential fashion forming a multimeric L10(L12)X complex. Post-translationally, one or more lysine residues are methylated.

Its function is as follows. Forms part of the ribosomal stalk which helps the ribosome interact with GTP-bound translation factors. The polypeptide is Large ribosomal subunit protein uL11 (Pseudomonas syringae pv. tomato (strain ATCC BAA-871 / DC3000)).